Consider the following 371-residue polypeptide: Chaperone protein DnaJ (371 aa).

The J domain maps to 5-70 (SYYDILGVSK…KKRQAYDQFG (66 aa)). The segment at 139-217 (GREYKIEIPR…CGGQGLQEKR (79 aa)) adopts a CR-type zinc-finger fold. Zn(2+)-binding residues include Cys152, Cys155, Cys169, Cys172, Cys191, Cys194, Cys205, and Cys208. CXXCXGXG motif repeat units follow at residues 152 to 159 (CGDCNGSG), 169 to 176 (CPDCGGSG), 191 to 198 (CPTCRGKG), and 205 to 212 (CKTCGGQG).

The protein belongs to the DnaJ family. As to quaternary structure, homodimer. It depends on Zn(2+) as a cofactor.

It is found in the cytoplasm. Functionally, participates actively in the response to hyperosmotic and heat shock by preventing the aggregation of stress-denatured proteins and by disaggregating proteins, also in an autonomous, DnaK-independent fashion. Unfolded proteins bind initially to DnaJ; upon interaction with the DnaJ-bound protein, DnaK hydrolyzes its bound ATP, resulting in the formation of a stable complex. GrpE releases ADP from DnaK; ATP binding to DnaK triggers the release of the substrate protein, thus completing the reaction cycle. Several rounds of ATP-dependent interactions between DnaJ, DnaK and GrpE are required for fully efficient folding. Also involved, together with DnaK and GrpE, in the DNA replication of plasmids through activation of initiation proteins. The sequence is that of Chaperone protein DnaJ from Leptospira borgpetersenii serovar Hardjo-bovis (strain JB197).